The following is a 61-amino-acid chain: Overexpressed in colon carcinoma 1 protein homolog (61 aa).

The segment covering 1 to 13 (MGCGNSTAASTTP) has biased composition (polar residues). The segment at 1 to 61 (MGCGNSTAAS…AGQTASTHKE (61 aa)) is disordered. A compositionally biased stretch (basic and acidic residues) spans 18 to 34 (SAKDVQDDSSMDEEKRR). Positions 48-61 (TNETAGQTASTHKE) are enriched in polar residues.

Belongs to the OCC1 family.

The chain is Overexpressed in colon carcinoma 1 protein homolog (si:dkey-261e22.4) from Danio rerio (Zebrafish).